We begin with the raw amino-acid sequence, 72 residues long: MAKEDVIEVEGKVIEPLPNAMFRVELANGHRVLAHVSGKIRMNFIRILPGDRVTVELSPYDLNRGRIVYRYK.

The 72-residue stretch at methionine 1–lysine 72 folds into the S1-like domain.

Belongs to the IF-1 family. Component of the 30S ribosomal translation pre-initiation complex which assembles on the 30S ribosome in the order IF-2 and IF-3, IF-1 and N-formylmethionyl-tRNA(fMet); mRNA recruitment can occur at any time during PIC assembly.

It localises to the cytoplasm. One of the essential components for the initiation of protein synthesis. Stabilizes the binding of IF-2 and IF-3 on the 30S subunit to which N-formylmethionyl-tRNA(fMet) subsequently binds. Helps modulate mRNA selection, yielding the 30S pre-initiation complex (PIC). Upon addition of the 50S ribosomal subunit IF-1, IF-2 and IF-3 are released leaving the mature 70S translation initiation complex. The chain is Translation initiation factor IF-1 from Moorella thermoacetica (strain ATCC 39073 / JCM 9320).